A 352-amino-acid chain; its full sequence is Holliday junction branch migration complex subunit RuvB (352 aa).

Residues 13–201 are large ATPase domain (RuvB-L); sequence FSFRKKELRL…FGISQKIEFY (189 aa). Residues Arg-41, Gly-82, Lys-85, Thr-86, Thr-87, 148-150, Arg-191, Tyr-201, and Arg-238 contribute to the ATP site; that span reads EDF. Thr-86 provides a ligand contact to Mg(2+). Positions 202-273 are small ATPAse domain (RuvB-S); that stretch reads TCDELKQIIV…LIKKALNSYQ (72 aa). Positions 276-352 are head domain (RuvB-H); sequence EKGLDSLDRH…KYIDSKDDNF (77 aa). 2 residues coordinate DNA: Arg-330 and Arg-335.

It belongs to the RuvB family. In terms of assembly, homohexamer. Forms an RuvA(8)-RuvB(12)-Holliday junction (HJ) complex. HJ DNA is sandwiched between 2 RuvA tetramers; dsDNA enters through RuvA and exits via RuvB. An RuvB hexamer assembles on each DNA strand where it exits the tetramer. Each RuvB hexamer is contacted by two RuvA subunits (via domain III) on 2 adjacent RuvB subunits; this complex drives branch migration. In the full resolvosome a probable DNA-RuvA(4)-RuvB(12)-RuvC(2) complex forms which resolves the HJ.

Its subcellular location is the cytoplasm. The catalysed reaction is ATP + H2O = ADP + phosphate + H(+). Its function is as follows. The RuvA-RuvB-RuvC complex processes Holliday junction (HJ) DNA during genetic recombination and DNA repair, while the RuvA-RuvB complex plays an important role in the rescue of blocked DNA replication forks via replication fork reversal (RFR). RuvA specifically binds to HJ cruciform DNA, conferring on it an open structure. The RuvB hexamer acts as an ATP-dependent pump, pulling dsDNA into and through the RuvAB complex. RuvB forms 2 homohexamers on either side of HJ DNA bound by 1 or 2 RuvA tetramers; 4 subunits per hexamer contact DNA at a time. Coordinated motions by a converter formed by DNA-disengaged RuvB subunits stimulates ATP hydrolysis and nucleotide exchange. Immobilization of the converter enables RuvB to convert the ATP-contained energy into a lever motion, pulling 2 nucleotides of DNA out of the RuvA tetramer per ATP hydrolyzed, thus driving DNA branch migration. The RuvB motors rotate together with the DNA substrate, which together with the progressing nucleotide cycle form the mechanistic basis for DNA recombination by continuous HJ branch migration. Branch migration allows RuvC to scan DNA until it finds its consensus sequence, where it cleaves and resolves cruciform DNA. The chain is Holliday junction branch migration complex subunit RuvB from Prochlorococcus marinus (strain AS9601).